Here is a 266-residue protein sequence, read N- to C-terminus: 2-C-methyl-D-erythritol 4-phosphate cytidylyltransferase (266 aa).

Residues 229–266 (NRDCGPGTRDPESAHPQSSVSASAFSGPGSRAPGPEEI) are disordered. The span at 243–252 (HPQSSVSASA) shows a compositional bias: polar residues.

The protein belongs to the IspD/TarI cytidylyltransferase family. IspD subfamily.

The catalysed reaction is 2-C-methyl-D-erythritol 4-phosphate + CTP + H(+) = 4-CDP-2-C-methyl-D-erythritol + diphosphate. It functions in the pathway isoprenoid biosynthesis; isopentenyl diphosphate biosynthesis via DXP pathway; isopentenyl diphosphate from 1-deoxy-D-xylulose 5-phosphate: step 2/6. Its function is as follows. Catalyzes the formation of 4-diphosphocytidyl-2-C-methyl-D-erythritol from CTP and 2-C-methyl-D-erythritol 4-phosphate (MEP). In Xanthomonas axonopodis pv. citri (strain 306), this protein is 2-C-methyl-D-erythritol 4-phosphate cytidylyltransferase.